A 443-amino-acid polypeptide reads, in one-letter code: Probable glycine dehydrogenase (decarboxylating) subunit 1 (443 aa).

It belongs to the GcvP family. N-terminal subunit subfamily. In terms of assembly, the glycine cleavage system is composed of four proteins: P, T, L and H. In this organism, the P 'protein' is a heterodimer of two subunits.

It carries out the reaction N(6)-[(R)-lipoyl]-L-lysyl-[glycine-cleavage complex H protein] + glycine + H(+) = N(6)-[(R)-S(8)-aminomethyldihydrolipoyl]-L-lysyl-[glycine-cleavage complex H protein] + CO2. In terms of biological role, the glycine cleavage system catalyzes the degradation of glycine. The P protein binds the alpha-amino group of glycine through its pyridoxal phosphate cofactor; CO(2) is released and the remaining methylamine moiety is then transferred to the lipoamide cofactor of the H protein. The chain is Probable glycine dehydrogenase (decarboxylating) subunit 1 from Koribacter versatilis (strain Ellin345).